Reading from the N-terminus, the 452-residue chain is Flavanone 7-O-glucoside 2''-O-beta-L-rhamnosyltransferase (452 aa).

Residue H21 is the Proton acceptor of the active site. H21 contacts an anthocyanidin. The Charge relay role is filled by D121. Residues 136-156 traverse the membrane as a helical segment; it reads IAAILFLPLSAVACSFLLHNI. 6 residues coordinate UDP-beta-L-rhamnose: S268, V330, H347, G351, S352, and E355. Residues 407–436 adopt a coiled-coil conformation; sequence KHVVLQEEAKQIRRKANEISESMKKIGDAE.

This sequence belongs to the UDP-glycosyltransferase family. In terms of assembly, monomer. As to expression, expressed in young fruits and leaves.

The protein resides in the membrane. The catalysed reaction is flavanone 7-O-beta-D-glucoside + UDP-beta-L-rhamnose = flavanone 7-O-[alpha-L-rhamnosyl-(1-&gt;2)-beta-D-glucoside] + UDP + H(+). Involved in the production of the bitter neohesperidosides in citrus. Shows a strict specificity for UDP-rhamnose as donor. The protein is Flavanone 7-O-glucoside 2''-O-beta-L-rhamnosyltransferase (C12RT1) of Citrus maxima (Pomelo).